A 312-amino-acid polypeptide reads, in one-letter code: Ribosomal protein L11 methyltransferase (312 aa).

S-adenosyl-L-methionine contacts are provided by T160, G181, D203, and N248.

This sequence belongs to the methyltransferase superfamily. PrmA family.

It localises to the cytoplasm. It carries out the reaction L-lysyl-[protein] + 3 S-adenosyl-L-methionine = N(6),N(6),N(6)-trimethyl-L-lysyl-[protein] + 3 S-adenosyl-L-homocysteine + 3 H(+). Functionally, methylates ribosomal protein L11. In Fusobacterium nucleatum subsp. nucleatum (strain ATCC 25586 / DSM 15643 / BCRC 10681 / CIP 101130 / JCM 8532 / KCTC 2640 / LMG 13131 / VPI 4355), this protein is Ribosomal protein L11 methyltransferase.